Here is a 586-residue protein sequence, read N- to C-terminus: Acyl-coenzyme A synthetase ACSM3, mitochondrial (586 aa).

The N-terminal 27 residues, M1–A27, are a transit peptide targeting the mitochondrion. An N6-succinyllysine mark is found at K73 and K106. Residue K157 is modified to N6-acetyllysine. Residues T235–K243, E374–T379, D461, R476, and K572 contribute to the ATP site.

It belongs to the ATP-dependent AMP-binding enzyme family. Mg(2+) serves as cofactor. The cofactor is Mn(2+).

It is found in the mitochondrion. It localises to the mitochondrion matrix. The enzyme catalyses a medium-chain fatty acid + ATP + CoA = a medium-chain fatty acyl-CoA + AMP + diphosphate. The catalysed reaction is propanoate + ATP + CoA = propanoyl-CoA + AMP + diphosphate. It carries out the reaction butanoate + ATP + CoA = butanoyl-CoA + AMP + diphosphate. It catalyses the reaction 2-methylpropanoate + ATP + CoA = 2-methylpropanoyl-CoA + AMP + diphosphate. The enzyme catalyses 2-methylbutanoate + ATP + CoA = 2-methylbutanoyl-CoA + AMP + diphosphate. The catalysed reaction is octanoate + ATP + CoA = octanoyl-CoA + AMP + diphosphate. Functionally, catalyzes the activation of fatty acids by CoA to produce an acyl-CoA, the first step in fatty acid metabolism. Capable of activating medium-chain fatty acids with a preference for isobutyrate among fatty acids with 2-6 carbon atoms. The protein is Acyl-coenzyme A synthetase ACSM3, mitochondrial (ACSM3) of Pongo abelii (Sumatran orangutan).